Consider the following 476-residue polypeptide: Glutamyl-tRNA(Gln) amidotransferase subunit A (476 aa).

Catalysis depends on charge relay system residues Lys69 and Ser144. Ser168 (acyl-ester intermediate) is an active-site residue.

Belongs to the amidase family. GatA subfamily. In terms of assembly, heterotrimer of A, B and C subunits.

It carries out the reaction L-glutamyl-tRNA(Gln) + L-glutamine + ATP + H2O = L-glutaminyl-tRNA(Gln) + L-glutamate + ADP + phosphate + H(+). Functionally, allows the formation of correctly charged Gln-tRNA(Gln) through the transamidation of misacylated Glu-tRNA(Gln) in organisms which lack glutaminyl-tRNA synthetase. The reaction takes place in the presence of glutamine and ATP through an activated gamma-phospho-Glu-tRNA(Gln). This is Glutamyl-tRNA(Gln) amidotransferase subunit A from Sulfolobus acidocaldarius (strain ATCC 33909 / DSM 639 / JCM 8929 / NBRC 15157 / NCIMB 11770).